Here is a 118-residue protein sequence, read N- to C-terminus: MTDTAEAVPNFEEMFASRFTENDKEYQEYLKRPPESPPIVEEWNSRAGGNQRNRGNRLQDNRQFRGRDNRWGWPSDNRSNQWHGRSWGNNYPQHRQEPYYPQQYGHYGYNQRPPYGYY.

N-acetylthreonine is present on Thr2. The tract at residues 2 to 55 (TDTAEAVPNFEEMFASRFTENDKEYQEYLKRPPESPPIVEEWNSRAGGNQRNRG) is interaction with RNMT. The interval 30–118 (LKRPPESPPI…YNQRPPYGYY (89 aa)) is disordered. Position 36 is a phosphoserine (Ser36). Residues 36 to 42 (SPPIVEE) carry the RNMT-activating domain motif. The span at 45–56 (SRAGGNQRNRGN) shows a compositional bias: low complexity. An RNA-binding region spans residues 56 to 118 (NRLQDNRQFR…YNQRPPYGYY (63 aa)). The span at 57–70 (RLQDNRQFRGRDNR) shows a compositional bias: basic and acidic residues. Residues 76-93 (DNRSNQWHGRSWGNNYPQ) are compositionally biased toward polar residues. The residue at position 85 (Arg85) is an Omega-N-methylarginine. Ser86 is subject to Phosphoserine. Over residues 98–109 (PYYPQQYGHYGY) the composition is skewed to low complexity.

It belongs to the RAM family. As to quaternary structure, interacts with RNMT; this interaction enhances mRNA binding and cap methyltransferase activity.

The protein resides in the nucleus. Its function is as follows. Regulatory subunit of the mRNA-capping methyltransferase RNMT:RAMAC complex that methylates the N7 position of the added guanosine to the 5'-cap structure of mRNAs. Promotes the recruitment of the methyl donor, S-adenosyl-L-methionine, to RNMT. Regulates RNMT expression by a post-transcriptional stabilizing mechanism. Binds RNA. The protein is RNA guanine-N7 methyltransferase activating subunit (RAMAC) of Pongo abelii (Sumatran orangutan).